A 261-amino-acid polypeptide reads, in one-letter code: Glandular kallikrein-7, submandibular/renal (261 aa).

The first 18 residues, 1-18 (MWFLILFLDLSLGQIDAA), serve as a signal peptide directing secretion. Residues 19 to 24 (PPGQSR) constitute a propeptide, activation peptide. The region spanning 25–258 (VIGGYKCEKN…FTSWIKEVMK (234 aa)) is the Peptidase S1 domain. Disulfide bonds link Cys31-Cys173, Cys50-Cys66, Cys152-Cys219, Cys184-Cys198, and Cys209-Cys234. His65 (charge relay system) is an active-site residue. Asn108 carries an N-linked (GlcNAc...) asparagine glycan. The active-site Charge relay system is the Asp120. The active-site Charge relay system is Ser213.

It belongs to the peptidase S1 family. Kallikrein subfamily. Kidney and submandibular gland. Not expressed in liver, pancreas, spleen, parotid, testis, cortex, prostate, ovary and pituitary.

The enzyme catalyses Preferential cleavage of Arg-|-Xaa bonds in small molecule substrates. Highly selective action to release kallidin (lysyl-bradykinin) from kininogen involves hydrolysis of Met-|-Xaa or Leu-|-Xaa.. Functionally, glandular kallikreins cleave Met-Lys and Arg-Ser bonds in kininogen to release Lys-bradykinin. Predominant kallikrein protein in the kidney. The sequence is that of Glandular kallikrein-7, submandibular/renal (Klk7) from Rattus norvegicus (Rat).